The sequence spans 128 residues: DNA polymerase epsilon subunit 3 (128 aa).

Basic and acidic residues predominate over residues 98–110; the sequence is EKKESKASKKDSN. The interval 98-128 is disordered; the sequence is EKKESKASKKDSNTAENANASATATAEEAPE. Residues 111-128 are compositionally biased toward low complexity; sequence TAENANASATATAEEAPE.

In terms of assembly, homodimer. Component of the DNA polymerase epsilon complex consisting of four subunits: the catalytic subunit PolE1/DNApol-epsilon255 and the accessory subunits PolE2/DNApol-epsilon58, Chrac-14/DNApolE3 and PolE4. Component of the chromatin accessibility complex (CHRAC), composed of Chrac-14, Chrac-16, Acf and Iswi. Forms an heterodimer with Chrac-16. The Chrac-14/Chrac-16 heterodimer interacts with Acf (via N-terminus). Interacts directly with Iswi and this interaction is further stabilized by association with Chrac-16. Component of the Ada2a-containing (ATAC) complex composed of at least Ada2a, Atac1, Hcf, Ada3, Gcn5, Mocs2B, Charac-14, Atac3, Atac2, NC2beta and wds. Interacts with cid.

The protein resides in the nucleus. Functionally, accessory component of the DNA polymerase epsilon complex. Participates in DNA repair and in chromosomal DNA replication. Histone-like protein which promotes nucleosome sliding of ATP-dependent nucleosome remodeling complexes. Part of the chromatin-accessibility complex (CHRAC) which uses energy/ATP to increase the general accessibility of DNA in chromatin. As a heterodimer with Chrac-16, binds DNA and facilitates nucleosome sliding by Acf. Has a role in DNA damage response by preventing cid mislocalization to chromatin. This chain is DNA polymerase epsilon subunit 3, found in Drosophila melanogaster (Fruit fly).